A 691-amino-acid polypeptide reads, in one-letter code: Glycine--tRNA ligase beta subunit (691 aa).

The protein belongs to the class-II aminoacyl-tRNA synthetase family. As to quaternary structure, tetramer of two alpha and two beta subunits.

The protein resides in the cytoplasm. It catalyses the reaction tRNA(Gly) + glycine + ATP = glycyl-tRNA(Gly) + AMP + diphosphate. This is Glycine--tRNA ligase beta subunit from Limosilactobacillus reuteri (strain DSM 20016) (Lactobacillus reuteri).